We begin with the raw amino-acid sequence, 450 residues long: Bifunctional protein GlmU (450 aa).

The interval 1-229 is pyrophosphorylase; the sequence is MRRHAIILAA…VEEIMGVNDR (229 aa). UDP-N-acetyl-alpha-D-glucosamine contacts are provided by residues 8–11, K22, Q72, and 77–78; these read LAAG and GT. Residue D102 coordinates Mg(2+). Residues G139, E154, and N227 each coordinate UDP-N-acetyl-alpha-D-glucosamine. A Mg(2+)-binding site is contributed by N227. Positions 230–250 are linker; it reads VMLSQAEKAMQRRTNHYHMLN. The interval 251–450 is N-acetyltransferase; that stretch reads GVTIIDPDST…RQTTKEGYRK (200 aa). Positions 332 and 350 each coordinate UDP-N-acetyl-alpha-D-glucosamine. H362 serves as the catalytic Proton acceptor. Y365 and N376 together coordinate UDP-N-acetyl-alpha-D-glucosamine. Residues 385–386, A422, and R439 contribute to the acetyl-CoA site; that span reads NY.

In the N-terminal section; belongs to the N-acetylglucosamine-1-phosphate uridyltransferase family. The protein in the C-terminal section; belongs to the transferase hexapeptide repeat family. As to quaternary structure, homotrimer. Mg(2+) serves as cofactor.

Its subcellular location is the cytoplasm. The enzyme catalyses alpha-D-glucosamine 1-phosphate + acetyl-CoA = N-acetyl-alpha-D-glucosamine 1-phosphate + CoA + H(+). It carries out the reaction N-acetyl-alpha-D-glucosamine 1-phosphate + UTP + H(+) = UDP-N-acetyl-alpha-D-glucosamine + diphosphate. Its pathway is nucleotide-sugar biosynthesis; UDP-N-acetyl-alpha-D-glucosamine biosynthesis; N-acetyl-alpha-D-glucosamine 1-phosphate from alpha-D-glucosamine 6-phosphate (route II): step 2/2. It functions in the pathway nucleotide-sugar biosynthesis; UDP-N-acetyl-alpha-D-glucosamine biosynthesis; UDP-N-acetyl-alpha-D-glucosamine from N-acetyl-alpha-D-glucosamine 1-phosphate: step 1/1. The protein operates within bacterial outer membrane biogenesis; LPS lipid A biosynthesis. Functionally, catalyzes the last two sequential reactions in the de novo biosynthetic pathway for UDP-N-acetylglucosamine (UDP-GlcNAc). The C-terminal domain catalyzes the transfer of acetyl group from acetyl coenzyme A to glucosamine-1-phosphate (GlcN-1-P) to produce N-acetylglucosamine-1-phosphate (GlcNAc-1-P), which is converted into UDP-GlcNAc by the transfer of uridine 5-monophosphate (from uridine 5-triphosphate), a reaction catalyzed by the N-terminal domain. The chain is Bifunctional protein GlmU from Staphylococcus aureus (strain Mu50 / ATCC 700699).